Consider the following 660-residue polypeptide: Bifunctional polymyxin resistance protein ArnA (660 aa).

The segment at 1 to 304 (MKAVIFAYHD…TLGLVAGARL (304 aa)) is formyltransferase ArnAFT. His-104 acts as the Proton donor; for formyltransferase activity in catalysis. Residues Arg-114 and 136 to 140 (VKRAD) each bind (6R)-10-formyltetrahydrofolate. Positions 314 to 660 (RRIRVLILGV…RSVDVAERAS (347 aa)) are dehydrogenase ArnADH. NAD(+) contacts are provided by residues Asp-347 and 368-369 (DI). Residues Ala-393, Tyr-398, and 432–433 (TS) each bind UDP-alpha-D-glucuronate. Glu-434 serves as the catalytic Proton acceptor; for decarboxylase activity. UDP-alpha-D-glucuronate contacts are provided by residues Arg-460, Asn-492, 526 to 535 (KLIDGGQQKR), and Tyr-613. The Proton donor; for decarboxylase activity role is filled by Arg-619.

This sequence in the N-terminal section; belongs to the Fmt family. UDP-L-Ara4N formyltransferase subfamily. In the C-terminal section; belongs to the NAD(P)-dependent epimerase/dehydratase family. UDP-glucuronic acid decarboxylase subfamily. As to quaternary structure, homohexamer, formed by a dimer of trimers.

The catalysed reaction is UDP-alpha-D-glucuronate + NAD(+) = UDP-beta-L-threo-pentopyranos-4-ulose + CO2 + NADH. The enzyme catalyses UDP-4-amino-4-deoxy-beta-L-arabinose + (6R)-10-formyltetrahydrofolate = UDP-4-deoxy-4-formamido-beta-L-arabinose + (6S)-5,6,7,8-tetrahydrofolate + H(+). It functions in the pathway nucleotide-sugar biosynthesis; UDP-4-deoxy-4-formamido-beta-L-arabinose biosynthesis; UDP-4-deoxy-4-formamido-beta-L-arabinose from UDP-alpha-D-glucuronate: step 1/3. Its pathway is nucleotide-sugar biosynthesis; UDP-4-deoxy-4-formamido-beta-L-arabinose biosynthesis; UDP-4-deoxy-4-formamido-beta-L-arabinose from UDP-alpha-D-glucuronate: step 3/3. The protein operates within bacterial outer membrane biogenesis; lipopolysaccharide biosynthesis. Its function is as follows. Bifunctional enzyme that catalyzes the oxidative decarboxylation of UDP-glucuronic acid (UDP-GlcUA) to UDP-4-keto-arabinose (UDP-Ara4O) and the addition of a formyl group to UDP-4-amino-4-deoxy-L-arabinose (UDP-L-Ara4N) to form UDP-L-4-formamido-arabinose (UDP-L-Ara4FN). The modified arabinose is attached to lipid A and is required for resistance to polymyxin and cationic antimicrobial peptides. In Salmonella enteritidis PT4 (strain P125109), this protein is Bifunctional polymyxin resistance protein ArnA.